Here is a 176-residue protein sequence, read N- to C-terminus: Glutathione-regulated potassium-efflux system ancillary protein KefF (176 aa).

FMN contacts are provided by residues His8, 14 to 17 (SHAN), 65 to 68 (MQWY), and 105 to 108 (TTGG).

This sequence belongs to the NAD(P)H dehydrogenase (quinone) family. KefF subfamily. In terms of assembly, homodimer. Interacts with KefC. FMN serves as cofactor.

It is found in the cell inner membrane. The enzyme catalyses a quinone + NADH + H(+) = a quinol + NAD(+). The catalysed reaction is a quinone + NADPH + H(+) = a quinol + NADP(+). In terms of biological role, regulatory subunit of a potassium efflux system that confers protection against electrophiles. Required for full activity of KefC. Shows redox enzymatic activity, but this enzymatic activity is not required for activation of KefC. The sequence is that of Glutathione-regulated potassium-efflux system ancillary protein KefF from Salmonella gallinarum (strain 287/91 / NCTC 13346).